Consider the following 242-residue polypeptide: tRNA (guanine-N(1)-)-methyltransferase (242 aa).

Residues Gly-115 and 134–139 (LGDFVL) contribute to the S-adenosyl-L-methionine site. Positions 210-224 (QEQREQRTAARRPDL) are enriched in basic and acidic residues. Positions 210 to 242 (QEQREQRTAARRPDLMQRWQQRFGADNDSEHRA) are disordered.

Belongs to the RNA methyltransferase TrmD family. As to quaternary structure, homodimer.

The protein resides in the cytoplasm. The enzyme catalyses guanosine(37) in tRNA + S-adenosyl-L-methionine = N(1)-methylguanosine(37) in tRNA + S-adenosyl-L-homocysteine + H(+). In terms of biological role, specifically methylates guanosine-37 in various tRNAs. The chain is tRNA (guanine-N(1)-)-methyltransferase from Synechococcus sp. (strain WH7803).